A 332-amino-acid chain; its full sequence is CXADR-like membrane protein (332 aa).

The signal sequence occupies residues 1 to 19 (MHTLIRSFLGLWYVLGALA). 2 consecutive Ig-like C2-type domains span residues 20-123 (QTEI…SFIT) and 130-220 (PSEL…VDVT). Over 20–231 (QTEIKLVADE…QSVSNTGILA (212 aa)) the chain is Extracellular. 2 cysteine pairs are disulfide-bonded: C35-C109 and C151-C204. N-linked (GlcNAc...) asparagine glycosylation occurs at N193. The chain crosses the membrane as a helical span at residues 232-252 (GVACGVVVGVFLIFFTVWLLF). At 253 to 332 (HKKEFKKREE…EQRHHCLEKI (80 aa)) the chain is on the cytoplasmic side. The tract at residues 276–332 (PKARLVKPGSSSSDSRSSQSGSSSTRSTTNSASRSQRTHSTQETPHGEQRHHCLEKI) is disordered. Positions 285–310 (SSSSDSRSSQSGSSSTRSTTNSASRS) are enriched in low complexity. The segment covering 320 to 332 (PHGEQRHHCLEKI) has biased composition (basic and acidic residues).

It localises to the cell junction. The protein resides in the tight junction. The protein localises to the cell membrane. This is CXADR-like membrane protein (clmp) from Xenopus tropicalis (Western clawed frog).